The following is a 217-amino-acid chain: Probable GTP-binding protein EngB (217 aa).

In terms of domain architecture, EngB-type G spans 27-201 (TGIEVAFAGR…RDKLDTWFSE (175 aa)). GTP is bound by residues 35–42 (GRSNAGKS), 62–66 (GRTQL), 80–83 (DLPG), 147–150 (TKAD), and 180–182 (FSS). Residues Ser-42 and Thr-64 each contribute to the Mg(2+) site.

Belongs to the TRAFAC class TrmE-Era-EngA-EngB-Septin-like GTPase superfamily. EngB GTPase family. The cofactor is Mg(2+).

Necessary for normal cell division and for the maintenance of normal septation. This chain is Probable GTP-binding protein EngB, found in Edwardsiella ictaluri (strain 93-146).